The chain runs to 148 residues: SsrA-binding protein (148 aa).

The tract at residues 119–148 (AKGKKQHDKRQSMKEADWKREKQRLIKHTR) is disordered. A compositionally biased stretch (basic and acidic residues) spans 127-142 (KRQSMKEADWKREKQR).

Belongs to the SmpB family.

The protein localises to the cytoplasm. Functionally, required for rescue of stalled ribosomes mediated by trans-translation. Binds to transfer-messenger RNA (tmRNA), required for stable association of tmRNA with ribosomes. tmRNA and SmpB together mimic tRNA shape, replacing the anticodon stem-loop with SmpB. tmRNA is encoded by the ssrA gene; the 2 termini fold to resemble tRNA(Ala) and it encodes a 'tag peptide', a short internal open reading frame. During trans-translation Ala-aminoacylated tmRNA acts like a tRNA, entering the A-site of stalled ribosomes, displacing the stalled mRNA. The ribosome then switches to translate the ORF on the tmRNA; the nascent peptide is terminated with the 'tag peptide' encoded by the tmRNA and targeted for degradation. The ribosome is freed to recommence translation, which seems to be the essential function of trans-translation. This is SsrA-binding protein from Neisseria meningitidis serogroup C (strain 053442).